The sequence spans 365 residues: Tartrate dehydrogenase/decarboxylase (365 aa).

3 residues coordinate Mn(2+): Asp-225, Asp-250, and Asp-254.

The protein belongs to the isocitrate and isopropylmalate dehydrogenases family. Homodimer. It depends on Mg(2+) as a cofactor. Requires Mn(2+) as cofactor. K(+) is required as a cofactor.

The protein localises to the cytoplasm. The catalysed reaction is tartrate + NAD(+) = 2-hydroxy-3-oxosuccinate + NADH + H(+). The enzyme catalyses (2R,3S)-tartrate + NAD(+) = 2-hydroxy-3-oxosuccinate + NADH + H(+). It catalyses the reaction (2R,3R)-tartrate + NAD(+) = 2-hydroxy-3-oxosuccinate + NADH + H(+). It carries out the reaction (2R,3R)-tartrate + H(+) = (R)-glycerate + CO2. The catalysed reaction is (R)-malate + NAD(+) = pyruvate + CO2 + NADH. Its pathway is carbohydrate acid metabolism; tartrate degradation; 2-hydroxy-3-oxosuccinate from L-tartrate: step 1/1. It functions in the pathway carbohydrate acid metabolism; tartrate degradation; 2-hydroxy-3-oxosuccinate from meso-tartrate: step 1/1. It participates in carbohydrate acid metabolism; tartrate degradation; D-glycerate from L-tartrate: step 1/1. Has multiple catalytic activities. Apart from catalyzing the oxidation of (+)-tartrate to oxaloglycolate, also converts meso-tartrate to D-glycerate and catalyzes the oxidative decarboxylation of D-malate to pyruvate. The chain is Tartrate dehydrogenase/decarboxylase from Pseudomonas putida (Arthrobacter siderocapsulatus).